The sequence spans 326 residues: Hairy/enhancer-of-split related with YRPW motif-like protein (326 aa).

The disordered stretch occupies residues 1 to 56; it reads MKRPRAPSGSDGESDGPIDVGQENDLSQMARPLTTPSPSQMQARKKRRGIIEKRRR. The tract at residues 42–111 is transcriptional repression and interaction with NCOR1 and SIN3A; it reads QARKKRRGII…GGTGFFDARA (70 aa). In terms of domain architecture, bHLH spans 43–98; it reads ARKKRRGIIEKRRRDRINSSLSELRRLVPTAFEKQGSSKLEKAEVLQMTVDHLKML. The region spanning 116-153 is the Orange domain; sequence FRSIGFRECLTEVIRYLGVLEGPSSHADPVRIRLLSHL. Disordered regions lie at residues 223 to 260 and 272 to 306; these read HRPAGTIPPTRRNLLPSRGVTSTQRAHLPERPAAPPPT and PIPPCSPTTAPGAGKSDDNVSGSISSPCPSGPTGR. The span at 292 to 305 shows a compositional bias: low complexity; sequence SGSISSPCPSGPTG.

The protein belongs to the HEY family. Interacts with HES1, HDAC1, NCOR1 and SIN3A. Self-associates. Interacts with GATA4, GATA6, HEY1 and HEY2. Expressed in heart and at lower levels in brain, lung, muscle, ovary and testis.

Its subcellular location is the nucleus. Its function is as follows. Transcriptional repressor which binds preferentially to the canonical E box sequence 5'-CACGTG-3'. Downstream effector of Notch signaling required for cardiovascular development. Specifically required for the Notch-induced endocardial epithelial to mesenchymal transition, which is itself criticial for cardiac valve and septum development. Represses transcription by the cardiac transcriptional activators GATA4 and GATA6. This Mus musculus (Mouse) protein is Hairy/enhancer-of-split related with YRPW motif-like protein (Heyl).